The chain runs to 126 residues: Phosphoribosyl-AMP cyclohydrolase (126 aa).

D76 is a binding site for Mg(2+). A Zn(2+)-binding site is contributed by C77. Residues D78 and D80 each coordinate Mg(2+). Zn(2+)-binding residues include C94 and C101.

The protein belongs to the PRA-CH family. In terms of assembly, homodimer. Mg(2+) is required as a cofactor. Requires Zn(2+) as cofactor.

Its subcellular location is the cytoplasm. It carries out the reaction 1-(5-phospho-beta-D-ribosyl)-5'-AMP + H2O = 1-(5-phospho-beta-D-ribosyl)-5-[(5-phospho-beta-D-ribosylamino)methylideneamino]imidazole-4-carboxamide. It functions in the pathway amino-acid biosynthesis; L-histidine biosynthesis; L-histidine from 5-phospho-alpha-D-ribose 1-diphosphate: step 3/9. Functionally, catalyzes the hydrolysis of the adenine ring of phosphoribosyl-AMP. This is Phosphoribosyl-AMP cyclohydrolase from Nitratidesulfovibrio vulgaris (strain ATCC 29579 / DSM 644 / CCUG 34227 / NCIMB 8303 / VKM B-1760 / Hildenborough) (Desulfovibrio vulgaris).